A 469-amino-acid polypeptide reads, in one-letter code: Diacetylchitobiose binding protein NgcE (469 aa).

The segment at residues 1–37 (MTIRAGSLDRRTLLRGAIATAAMGSFAVACSSPSSED) is a signal peptide (tat-type signal). The interval 30 to 54 (CSSPSSEDKESDSGPKGEKSANNPF) is disordered. A compositionally biased stretch (basic and acidic residues) spans 35-48 (SEDKESDSGPKGEK).

Belongs to the bacterial solute-binding protein 1 family. As to quaternary structure, the complex is composed of two ATP-binding proteins (MsiK), two transmembrane proteins (NgcF and NgcG) and a solute-binding protein (NgcE). In terms of processing, predicted to be exported by the Tat system. The position of the signal peptide cleavage has not been experimentally proven.

It localises to the cell membrane. Its function is as follows. Part of the ABC transporter complex NgcEFG-MsiK involved in N,N'-diacetylchitobiose ((GlcNAc)2) uptake. Binds (GlcNAc)2. Can also bind GlcNAc. The sequence is that of Diacetylchitobiose binding protein NgcE from Streptomyces coelicolor (strain ATCC BAA-471 / A3(2) / M145).